A 316-amino-acid polypeptide reads, in one-letter code: 4-hydroxy-3-methylbut-2-enyl diphosphate reductase (316 aa).

Residue Cys-12 participates in [4Fe-4S] cluster binding. (2E)-4-hydroxy-3-methylbut-2-enyl diphosphate-binding residues include His-41 and His-74. Dimethylallyl diphosphate contacts are provided by His-41 and His-74. His-41 and His-74 together coordinate isopentenyl diphosphate. Cys-96 lines the [4Fe-4S] cluster pocket. A (2E)-4-hydroxy-3-methylbut-2-enyl diphosphate-binding site is contributed by His-124. His-124 is a binding site for dimethylallyl diphosphate. His-124 provides a ligand contact to isopentenyl diphosphate. Residue Glu-126 is the Proton donor of the active site. Thr-169 contacts (2E)-4-hydroxy-3-methylbut-2-enyl diphosphate. [4Fe-4S] cluster is bound at residue Cys-199. The (2E)-4-hydroxy-3-methylbut-2-enyl diphosphate site is built by Ser-227, Ser-228, Asn-229, and Ser-271. Positions 227, 228, 229, and 271 each coordinate dimethylallyl diphosphate. Isopentenyl diphosphate-binding residues include Ser-227, Ser-228, Asn-229, and Ser-271.

Belongs to the IspH family. Requires [4Fe-4S] cluster as cofactor.

It catalyses the reaction isopentenyl diphosphate + 2 oxidized [2Fe-2S]-[ferredoxin] + H2O = (2E)-4-hydroxy-3-methylbut-2-enyl diphosphate + 2 reduced [2Fe-2S]-[ferredoxin] + 2 H(+). The catalysed reaction is dimethylallyl diphosphate + 2 oxidized [2Fe-2S]-[ferredoxin] + H2O = (2E)-4-hydroxy-3-methylbut-2-enyl diphosphate + 2 reduced [2Fe-2S]-[ferredoxin] + 2 H(+). The protein operates within isoprenoid biosynthesis; dimethylallyl diphosphate biosynthesis; dimethylallyl diphosphate from (2E)-4-hydroxy-3-methylbutenyl diphosphate: step 1/1. It participates in isoprenoid biosynthesis; isopentenyl diphosphate biosynthesis via DXP pathway; isopentenyl diphosphate from 1-deoxy-D-xylulose 5-phosphate: step 6/6. Functionally, catalyzes the conversion of 1-hydroxy-2-methyl-2-(E)-butenyl 4-diphosphate (HMBPP) into a mixture of isopentenyl diphosphate (IPP) and dimethylallyl diphosphate (DMAPP). Acts in the terminal step of the DOXP/MEP pathway for isoprenoid precursor biosynthesis. In Stenotrophomonas maltophilia (strain K279a), this protein is 4-hydroxy-3-methylbut-2-enyl diphosphate reductase.